A 310-amino-acid chain; its full sequence is Proline-rich 28 kDa antigen (310 aa).

The N-terminal stretch at methionine 1–alanine 32 is a signal peptide. The tract at residues glutamine 278–arginine 310 is disordered.

It to M.leprae ML0031.

This Mycobacterium bovis (strain ATCC BAA-935 / AF2122/97) protein is Proline-rich 28 kDa antigen (mtc28).